Reading from the N-terminus, the 179-residue chain is ADP-ribosylation factor 1-like 1 (179 aa).

The N-myristoyl glycine moiety is linked to residue G2. The interval 3–16 (LFFSKISSFMFPNI) is important for the stable binding to the membranes. GTP-binding positions include 24–32 (GLDGAGKTT), 126–129 (NKQD), and A160.

The protein belongs to the small GTPase superfamily. Arf family.

It localises to the golgi apparatus membrane. The catalysed reaction is GTP + H2O = GDP + phosphate + H(+). With respect to regulation, alternates between an inactive GDP-bound form and an active GTP-bound form. Activated by a guanine nucleotide-exchange factor (GEF) and inactivated by GTPase-activating protein (GAP). Small GTPase involved in protein trafficking between different compartments. Modulates vesicle budding and uncoating within the Golgi complex. In its GTP-bound form, triggers the recruitment of coatomer proteins to the Golgi membrane. The hydrolysis of ARF1-bound GTP, which is mediated by ARFGAPs proteins, is required for dissociation of coat proteins from Golgi membranes and vesicles. This Caenorhabditis elegans protein is ADP-ribosylation factor 1-like 1 (arf-1.1).